A 1087-amino-acid chain; its full sequence is Exportin-7 (1087 aa).

One can recognise an Importin N-terminal domain in the interval 30–96 (AEKALVEFTN…RNYVLNYLAT (67 aa)).

Belongs to the exportin family.

It is found in the cytoplasm. It localises to the nucleus. Its function is as follows. Mediates the nuclear export of proteins (cargos) with broad substrate specificity. The polypeptide is Exportin-7 (XPO7) (Gallus gallus (Chicken)).